The chain runs to 412 residues: Alanyl-tRNA editing protein Aarsd1 (412 aa).

The Zn(2+) site is built by H109 and H113. At S174 the chain carries Phosphoserine. Residues C209 and H213 each coordinate Zn(2+).

It belongs to the class-II aminoacyl-tRNA synthetase family. Alax-L subfamily. Requires Zn(2+) as cofactor.

It is found in the cytoplasm. Functionally, functions in trans to edit the amino acid moiety from incorrectly charged tRNA(Ala). The sequence is that of Alanyl-tRNA editing protein Aarsd1 (AARSD1) from Homo sapiens (Human).